A 279-amino-acid chain; its full sequence is Large ribosomal subunit protein uL2 (279 aa).

Disordered regions lie at residues Ser-32–His-53 and Ala-225–Lys-279. The segment covering Lys-253 to Ile-268 has biased composition (basic and acidic residues). Over residues Val-269–Lys-279 the composition is skewed to basic residues.

It belongs to the universal ribosomal protein uL2 family. In terms of assembly, part of the 50S ribosomal subunit. Forms a bridge to the 30S subunit in the 70S ribosome.

Functionally, one of the primary rRNA binding proteins. Required for association of the 30S and 50S subunits to form the 70S ribosome, for tRNA binding and peptide bond formation. It has been suggested to have peptidyltransferase activity; this is somewhat controversial. Makes several contacts with the 16S rRNA in the 70S ribosome. The protein is Large ribosomal subunit protein uL2 of Clavibacter michiganensis subsp. michiganensis (strain NCPPB 382).